Consider the following 449-residue polypeptide: Methylenetetrahydrofolate--tRNA-(uracil-5-)-methyltransferase TrmFO (449 aa).

Position 9–14 (9–14 (GGGMAG)) interacts with FAD.

This sequence belongs to the MnmG family. TrmFO subfamily. The cofactor is FAD.

It localises to the cytoplasm. It catalyses the reaction uridine(54) in tRNA + (6R)-5,10-methylene-5,6,7,8-tetrahydrofolate + NADH + H(+) = 5-methyluridine(54) in tRNA + (6S)-5,6,7,8-tetrahydrofolate + NAD(+). The enzyme catalyses uridine(54) in tRNA + (6R)-5,10-methylene-5,6,7,8-tetrahydrofolate + NADPH + H(+) = 5-methyluridine(54) in tRNA + (6S)-5,6,7,8-tetrahydrofolate + NADP(+). Functionally, catalyzes the folate-dependent formation of 5-methyl-uridine at position 54 (M-5-U54) in all tRNAs. The chain is Methylenetetrahydrofolate--tRNA-(uracil-5-)-methyltransferase TrmFO from Ruegeria pomeroyi (strain ATCC 700808 / DSM 15171 / DSS-3) (Silicibacter pomeroyi).